Consider the following 397-residue polypeptide: uncharacterized protein (397 aa).

The next 12 membrane-spanning stretches (helical) occupy residues 10-30, 48-68, 76-96, 106-126, 141-161, 165-185, 209-229, 242-262, 274-294, 296-316, 334-354, and 363-383; these read FIIF…YAVM, GLLV…VTII, PVLL…ALAP, ILSA…ASEM, GGLT…GDVL, AVFS…MAAV, LFSF…YTFI, VGIT…NFFA, MIGV…IAIY, AAAI…PPLL, VSVS…GMIL, and LFAG…FAHL.

The protein belongs to the major facilitator superfamily.

It localises to the cell membrane. This is an uncharacterized protein from Bacillus subtilis (strain 168).